We begin with the raw amino-acid sequence, 199 residues long: Recombination protein RecR (199 aa).

The C4-type zinc-finger motif lies at 56–71; sequence CAICGNVAEHEQCRIC. The Toprim domain maps to 79–174; that stretch reads TVLCVVEEPK…RVTRLASGLP (96 aa).

This sequence belongs to the RecR family.

Functionally, may play a role in DNA repair. It seems to be involved in an RecBC-independent recombinational process of DNA repair. It may act with RecF and RecO. The polypeptide is Recombination protein RecR (Acidothermus cellulolyticus (strain ATCC 43068 / DSM 8971 / 11B)).